The sequence spans 240 residues: Adenosylcobinamide-GDP ribazoletransferase (240 aa).

5 helical membrane-spanning segments follow: residues leucine 31 to leucine 51, alanine 62 to alanine 81, isoleucine 109 to valine 129, isoleucine 133 to leucine 153, and valine 179 to leucine 199.

Belongs to the CobS family. Mg(2+) is required as a cofactor.

Its subcellular location is the cell inner membrane. The catalysed reaction is alpha-ribazole + adenosylcob(III)inamide-GDP = adenosylcob(III)alamin + GMP + H(+). It catalyses the reaction alpha-ribazole 5'-phosphate + adenosylcob(III)inamide-GDP = adenosylcob(III)alamin 5'-phosphate + GMP + H(+). Its pathway is cofactor biosynthesis; adenosylcobalamin biosynthesis; adenosylcobalamin from cob(II)yrinate a,c-diamide: step 7/7. Joins adenosylcobinamide-GDP and alpha-ribazole to generate adenosylcobalamin (Ado-cobalamin). Also synthesizes adenosylcobalamin 5'-phosphate from adenosylcobinamide-GDP and alpha-ribazole 5'-phosphate. In Pseudomonas putida (strain ATCC 700007 / DSM 6899 / JCM 31910 / BCRC 17059 / LMG 24140 / F1), this protein is Adenosylcobinamide-GDP ribazoletransferase.